The primary structure comprises 139 residues: D-ribose pyranase (139 aa).

Histidine 20 functions as the Proton donor in the catalytic mechanism. Residues aspartate 28, histidine 106, and 128 to 130 each bind substrate; that span reads YAN.

It belongs to the RbsD / FucU family. RbsD subfamily. As to quaternary structure, homodecamer.

The protein resides in the cytoplasm. The enzyme catalyses beta-D-ribopyranose = beta-D-ribofuranose. The protein operates within carbohydrate metabolism; D-ribose degradation; D-ribose 5-phosphate from beta-D-ribopyranose: step 1/2. In terms of biological role, catalyzes the interconversion of beta-pyran and beta-furan forms of D-ribose. The polypeptide is D-ribose pyranase (Actinobacillus succinogenes (strain ATCC 55618 / DSM 22257 / CCUG 43843 / 130Z)).